We begin with the raw amino-acid sequence, 1063 residues long: Presequence protease, mitochondrial (1063 aa).

The N-terminal 33 residues, 1–33 (MLRLANRVSRKDSGNLGIAQLKKRLLATSGVSQ), are a transit peptide targeting the mitochondrion. Residue His105 coordinates Zn(2+). Glu108 (proton acceptor) is an active-site residue. Zn(2+) is bound at residue His109. Residue Glu181 is part of the active site. A Zn(2+)-binding site is contributed by Glu206.

It belongs to the peptidase M16 family. PreP subfamily. Monomer and homodimer; homodimerization is induced by binding of the substrate. Zn(2+) is required as a cofactor.

It localises to the mitochondrion intermembrane space. The protein resides in the mitochondrion matrix. In terms of biological role, degrades mitochondrial transit peptides after their cleavage in the intermembrane space or in the matrix, and presequence peptides; clearance of these peptides is required to keep the presequence processing machinery running. Preferentially cleaves the N-terminal side of paired basic amino acid residues. Also degrades other unstructured peptides. May function as an ATP-dependent peptidase as opposed to a metalloendopeptidase. The chain is Presequence protease, mitochondrial (CYM1) from Debaryomyces hansenii (strain ATCC 36239 / CBS 767 / BCRC 21394 / JCM 1990 / NBRC 0083 / IGC 2968) (Yeast).